Here is a 190-residue protein sequence, read N- to C-terminus: Ribose 1,5-bisphosphate phosphokinase PhnN (190 aa).

An ATP-binding site is contributed by 19 to 26 (GPSGVGKD).

Belongs to the ribose 1,5-bisphosphokinase family.

The enzyme catalyses alpha-D-ribose 1,5-bisphosphate + ATP = 5-phospho-alpha-D-ribose 1-diphosphate + ADP. The protein operates within metabolic intermediate biosynthesis; 5-phospho-alpha-D-ribose 1-diphosphate biosynthesis; 5-phospho-alpha-D-ribose 1-diphosphate from D-ribose 5-phosphate (route II): step 3/3. Functionally, catalyzes the phosphorylation of ribose 1,5-bisphosphate to 5-phospho-D-ribosyl alpha-1-diphosphate (PRPP). The sequence is that of Ribose 1,5-bisphosphate phosphokinase PhnN from Ruegeria sp. (strain TM1040) (Silicibacter sp.).